The primary structure comprises 967 residues: A disintegrin and metalloproteinase with thrombospondin motifs 1 (967 aa).

Disordered regions lie at residues 1–27 and 192–250; these read MQRAVPEGFGRRKLGSDMGNAERAPGS and GDVG…SIRK. The first 49 residues, 1 to 49, serve as a signal peptide directing secretion; that stretch reads MQRAVPEGFGRRKLGSDMGNAERAPGSRSFGPVPTLLLLAAALLAVSDA. A propeptide spanning residues 50–252 is cleaved from the precursor; it reads LGRPSEEDEE…TGTGSIRKKR (203 aa). The Cysteine switch signature appears at 196–203; sequence GTCGVVDD. A Zn(2+)-binding site is contributed by C198. A compositionally biased stretch (basic and acidic residues) spans 203 to 212; that stretch reads DEPRPTGKAE. Positions 213-226 are enriched in acidic residues; the sequence is TEDEDEGTEGEDEG. The 210-residue stretch at 258–467 folds into the Peptidase M12B domain; that stretch reads RYVETMLVAD…GHGECLMDKP (210 aa). Ca(2+)-binding residues include E261, D344, and D351. 4 cysteine pairs are disulfide-bonded: C333–C385, C362–C367, C379–C462, and C417–C446. A Zn(2+)-binding site is contributed by H401. Residue E402 is part of the active site. Positions 405 and 411 each coordinate Zn(2+). Positions 462 and 465 each coordinate Ca(2+). Residues 476 to 559 form the Disintegrin domain; the sequence is DLPGTSYDAN…DRKHFDTPFH (84 aa). 4 disulfides stabilise this stretch: C488–C511, C499–C521, C506–C540, and C534–C545. An N-linked (GlcNAc...) asparagine glycan is attached at N547. A TSP type-1 1 domain is found at 559–614; it reads HGSWGMWGPWGDCSRTCGGGVQYTMRECDNPVPKNGGKYCEGKRVRYRSCNLEDCP. Intrachain disulfides connect C571–C608, C575–C613, and C586–C598. Residues N720 and N764 are each glycosylated (N-linked (GlcNAc...) asparagine). Residues 725 to 849 form a spacer region; it reads KKISGSVTSA…YFVKKKKESF (125 aa). TSP type-1 domains follow at residues 854 to 905 and 908 to 967; these read TFSA…RPCA and PCPQ…AECS.

Zn(2+) serves as cofactor. The precursor is cleaved by a furin endopeptidase. In terms of processing, glycosylated. Can be O-fucosylated by POFUT2 on a serine or a threonine residue found within the consensus sequence C1-X(2)-(S/T)-C2-G of the TSP type-1 repeat domains where C1 and C2 are the first and second cysteine residue of the repeat, respectively. Fucosylated repeats can then be further glycosylated by the addition of a beta-1,3-glucose residue by the glucosyltransferase, B3GALTL. Fucosylation mediates the efficient secretion of ADAMTS family members. Can also be C-glycosylated with one or two mannose molecules on tryptophan residues within the consensus sequence W-X-X-W of the TPRs, and N-glycosylated. These other glycosylations can also facilitate secretion.

It is found in the secreted. The protein localises to the extracellular space. Its subcellular location is the extracellular matrix. Its function is as follows. Metalloprotease which cleaves aggrecan, a cartilage proteoglycan, at the '1938-Glu-|-Leu-1939' site (within the chondroitin sulfate attachment domain), and may be involved in its turnover. Also cleaves COMP. Has angiogenic inhibitor activity. May play a critical role in follicular rupture. The polypeptide is A disintegrin and metalloproteinase with thrombospondin motifs 1 (ADAMTS1) (Homo sapiens (Human)).